The sequence spans 301 residues: Heterogeneous nuclear ribonucleoprotein D-like (301 aa).

RRM domains lie at 29–111 and 114–193; these read GKMF…KGKE and KKVF…QPKE. Residue Lys-42 is modified to N6-methyllysine. Lys-90 is covalently cross-linked (Glycyl lysine isopeptide (Lys-Gly) (interchain with G-Cter in SUMO2)). Lys-97 carries the N6-acetyllysine modification. The residue at position 122 (Ser-122) is a Phosphoserine. 2 disordered regions span residues 194–229 and 279–301; these read VYRQ…NWNQ and GQQS…YQPY. Residues 204-223 are compositionally biased toward gly residues; sequence GGRGAAAGGRGGARGRGRGQ. The interval 223-301 is necessary for interaction with TNPO1; that stretch reads QGQNWNQGFN…GNHQNNYQPY (79 aa). Arg-289 is subject to Dimethylated arginine; alternate. Residue Arg-289 is modified to Omega-N-methylarginine; alternate.

In terms of assembly, interacts with TNPO1. Interacts with ZNF148. In terms of processing, dimethylation of Arg-289 is probably of the asymmetric type. Expressed in skeletal muscle, myoblast, myotube, heart, brain, liver, kidney, heart, lung, stomach, small intestine, large intestine, spleen, and testis (at protein level). Expressed in brain, skeletal muscle, heart, lung, liver, stomach, small intestine, large intestine, kidney, spleen and testis.

Its subcellular location is the nucleus. It is found in the cytoplasm. In terms of biological role, acts as a transcriptional regulator. Promotes transcription repression. Promotes transcription activation in differentiated myotubes. Binds to double- and single-stranded DNA sequences. Binds to the transcription suppressor CATR sequence of the COX5B promoter. Binds with high affinity to RNA molecules that contain AU-rich elements (AREs) found within the 3'-UTR of many proto-oncogenes and cytokine mRNAs. Binds both to nuclear and cytoplasmic poly(A) mRNAs. Binds to poly(G) and poly(A), but not to poly(U) or poly(C) RNA homopolymers. Binds to the 5'-ACUAGC-3' RNA consensus sequence. The protein is Heterogeneous nuclear ribonucleoprotein D-like (Hnrnpdl) of Mus musculus (Mouse).